Consider the following 875-residue polypeptide: ATP-dependent helicase Lhr-Core (875 aa).

Positions 35, 58, 59, 173, 174, 355, 372, and 375 each coordinate ATP. The Helicase ATP-binding domain occupies 39 to 230 (IPLIKQNYNV…FLVGKDREYR (192 aa)). The DEIH box signature appears at 173 to 176 (DEIH). A Helicase C-terminal domain is found at 247-419 (PVKDLVHSSE…SIHIPKNPLD (173 aa)). The segment at 420 to 506 (VLSQIIVSAS…IFYTNSGTIP (87 aa)) is WH domain. The tract at residues 507-875 (DEAMISVVTE…VNIELEYTSV (369 aa)) is domain 4.

This sequence belongs to the Lhr helicase family. Lhr-Core subfamily. In terms of assembly, monomer and homodimer. The monomeric form has helicase, ATPase and strand annealing activities, while the dimeric form only has ATPAse and strand annealing activities. Interacts with DNA topoisomerase 3 (topA).

The enzyme catalyses Couples ATP hydrolysis with the unwinding of duplex DNA by translocating in the 3'-5' direction.. It carries out the reaction ATP + H2O = ADP + phosphate + H(+). DNA topoisomerase 3 (topA) inhibits helicase activity on Holliday junctions (HJ) but has no effect on ATPase activity. DNA helicase that translocates in a 3'-5' direction on single-stranded (ss)DNA, probably involved in DNA repair. Unwinds DNA in a 3'-5' direction, unwinding is ATP-dependent, acts preferentially on fork and 3'-tailed DNA; bubble and blunt-ended double-stranded (ds)DNA are not substrates. Has winding and unwinding activity, unwinds Holliday junction (HJ) DNA in the presence of ATP, the main product is forked DNA, single-stranded binding protein (SSB) does not stimulate activity. Anneals complementary oligonucleotides in an ATP-independent manner to form HJ and fork structures, thus can perform strand exchange. Preferentially binds HJ, forked and ssDNA, dsDNA is bound less well. LhrC-Core (Hel112) inhibits the exonuclease activity of the HerA-NurA complex on ss- and dsDNA, has no effect on ssDNA nicking by NurA; HerA-NurA are involved in DNA end-resection during DNA double-strand break repair. This is ATP-dependent helicase Lhr-Core from Saccharolobus solfataricus (strain ATCC 35092 / DSM 1617 / JCM 11322 / P2) (Sulfolobus solfataricus).